We begin with the raw amino-acid sequence, 311 residues long: Cathepsin B (311 aa).

An N-terminal signal peptide occupies residues 1-19 (MRVLLSLVVILFIINSAFA). The propeptide occupies 20–78 (VKINIGRPTKSHKTIHHETWVEEQTDQFDNIKVGQLLGFKRSPNRPKLQIKSYDPLGVQ). Residue asparagine 91 is glycosylated (N-linked (GlcNAc...) asparagine). Disulfide bonds link cysteine 92–cysteine 121, cysteine 104–cysteine 145, cysteine 138–cysteine 191, cysteine 167–cysteine 195, and cysteine 175–cysteine 182. The active site involves cysteine 107. N-linked (GlcNAc...) asparagine glycosylation is present at asparagine 198. Active-site residues include histidine 261 and asparagine 281. An N-linked (GlcNAc...) asparagine glycan is attached at asparagine 290.

It belongs to the peptidase C1 family.

It is found in the lysosome. The enzyme catalyses Hydrolysis of proteins with broad specificity for peptide bonds. Preferentially cleaves -Arg-Arg-|-Xaa bonds in small molecule substrates (thus differing from cathepsin L). In addition to being an endopeptidase, shows peptidyl-dipeptidase activity, liberating C-terminal dipeptides.. Functionally, thiol protease which is believed to participate in intracellular degradation and turnover of proteins. The protein is Cathepsin B (ctsB) of Dictyostelium discoideum (Social amoeba).